Here is a 520-residue protein sequence, read N- to C-terminus: Aspartate-proton symporter (520 aa).

Helical transmembrane passes span 13–33 (LFDL…LFAV), 49–69 (ILGG…GAAL), 85–105 (HLVG…LISI), 130–150 (TISG…LNYW), 161–181 (IISI…IFHF), 201–221 (AAIS…IVSV), 232–252 (IPIA…VLQV), 281–301 (IAVM…AILS), 345–365 (WLSF…NALV), 366–386 (NVCS…SAAL), 402–422 (MSII…WSGW), 425–445 (VSWL…FSKY), 460–480 (AWWL…GSFG), and 482–502 (GLGI…SLAI).

The protein belongs to the amino acid-polyamine-organocation (APC) superfamily. AGT (TC 2.A.3.11) family.

The protein resides in the cell membrane. Uptake of L-aspartate with the concomitant import of a proton. Can also transport aspartate hydroxamate and L-glutamate with lower affinity and efficiency. This chain is Aspartate-proton symporter (yveA), found in Bacillus subtilis (strain 168).